The following is a 338-amino-acid chain: Probable dual-specificity RNA methyltransferase RlmN (338 aa).

E89 functions as the Proton acceptor in the catalytic mechanism. Positions 95–325 (HNYGMSACVT…AILRKEQGHD (231 aa)) constitute a Radical SAM core domain. Cysteines 102 and 330 form a disulfide. Positions 109, 113, and 116 each coordinate [4Fe-4S] cluster. Residues 156–157 (GE), S188, 211–213 (SLH), and N287 contribute to the S-adenosyl-L-methionine site. C330 acts as the S-methylcysteine intermediate in catalysis.

The protein belongs to the radical SAM superfamily. RlmN family. Requires [4Fe-4S] cluster as cofactor.

It localises to the cytoplasm. The enzyme catalyses adenosine(2503) in 23S rRNA + 2 reduced [2Fe-2S]-[ferredoxin] + 2 S-adenosyl-L-methionine = 2-methyladenosine(2503) in 23S rRNA + 5'-deoxyadenosine + L-methionine + 2 oxidized [2Fe-2S]-[ferredoxin] + S-adenosyl-L-homocysteine. It catalyses the reaction adenosine(37) in tRNA + 2 reduced [2Fe-2S]-[ferredoxin] + 2 S-adenosyl-L-methionine = 2-methyladenosine(37) in tRNA + 5'-deoxyadenosine + L-methionine + 2 oxidized [2Fe-2S]-[ferredoxin] + S-adenosyl-L-homocysteine. Its function is as follows. Specifically methylates position 2 of adenine 2503 in 23S rRNA and position 2 of adenine 37 in tRNAs. The chain is Probable dual-specificity RNA methyltransferase RlmN from Acholeplasma laidlawii (strain PG-8A).